Consider the following 283-residue polypeptide: Pantothenate synthetase (283 aa).

An ATP-binding site is contributed by 30 to 37 (MGNLHDGH). His-37 functions as the Proton donor in the catalytic mechanism. Gln-61 is a binding site for (R)-pantoate. Gln-61 provides a ligand contact to beta-alanine. 149 to 152 (GEKD) serves as a coordination point for ATP. Position 155 (Gln-155) interacts with (R)-pantoate. 186-189 (LSSR) lines the ATP pocket.

The protein belongs to the pantothenate synthetase family. In terms of assembly, homodimer.

The protein resides in the cytoplasm. The enzyme catalyses (R)-pantoate + beta-alanine + ATP = (R)-pantothenate + AMP + diphosphate + H(+). Its pathway is cofactor biosynthesis; (R)-pantothenate biosynthesis; (R)-pantothenate from (R)-pantoate and beta-alanine: step 1/1. Functionally, catalyzes the condensation of pantoate with beta-alanine in an ATP-dependent reaction via a pantoyl-adenylate intermediate. In Shigella dysenteriae serotype 1 (strain Sd197), this protein is Pantothenate synthetase.